The primary structure comprises 373 residues: Probable ethanolamine permease EutH (373 aa).

The next 10 helical transmembrane spans lie at 5 to 25 (EIII…KIIG), 38 to 58 (IMAM…APVL), 61 to 81 (ILSP…AMFA), 111 to 131 (ILGS…LGII), 143 to 163 (VLSG…VAGF), 166 to 186 (IMIF…MLGL), 197 to 217 (FTIF…AGAI), 236 to 256 (IEIV…VFVI), 307 to 327 (VAFA…TAGV), and 331 to 351 (MIFP…AVGI).

Belongs to the EutH family.

The protein resides in the cell membrane. The catalysed reaction is ethanolamine(in) = ethanolamine(out). Functionally, probably involved in the diffusion of protonated ethanolamine (EA) into the cell at low pH. At low pH most EA is protonated, and this permease becomes necessary. Contributes to bacterial survival and replication in acidic macrophage vacuoles, but not to bacterial uptake by macrophages. This Listeria monocytogenes serotype 1/2a (strain 10403S) protein is Probable ethanolamine permease EutH.